Here is a 536-residue protein sequence, read N- to C-terminus: Cytochrome P450 monooxygenase fscF (536 aa).

Residues 9–29 (VSWLCALFTAIALYCIAVAFY) form a helical membrane-spanning segment. Cys-464 contributes to the heme binding site.

This sequence belongs to the cytochrome P450 family. The cofactor is heme.

The protein resides in the membrane. It functions in the pathway secondary metabolite biosynthesis. In terms of biological role, cytochrome P450 monooxygenase; part of the fragmented gene cluster that mediates the biosynthesis of fusarochromene, a tryptophan-derived metabolite closely related to a group of mycotoxins including fusarochromanone. Within the pathway, fscF catalyzes the epoxidation of desacetylfusarochromene which opens the way to the production of fusarochromanones. The first step of the pathway is the epimerization of L-tryptophan to D-tryptophan in the presence of the NRPS-like tryptophan epimerase fscC. D-tryptophan is subsequently hydroxylated by the tryptophan 6-hydroxylase fscE to yield 6-hydroxytryptophan. The pyrrole ring undergoes cleavaged by the tryptophan 2,3-dioxygenase fscD and is finally converted to 4-hydroxykyrunenine by the hydrolase fscH. The NRPS-like oxidoreductase fscA reduces the carboxyl group to primary alcohol and the DMATS-type prenyltransferase fscG performs prenylation, followed by the formation of a chromene ring catalyzed by the oxidoreductase fscI, which leads to desacetylfusarochromene. Epoxidation by fscF and rearrangement reactions of chromene double bonds convert compound desacetylfusarochromene to fusarochromanones. Although specific acetyltransferases were not found near the fsc gene cluster, several predicted enzymes containing the N-acetyltransferase superfamily domain are present in the genome of F.equiseti. These predicted enzymes may have the potential to convert desacetylfusarochromene to fusarochromene. This chain is Cytochrome P450 monooxygenase fscF, found in Fusarium equiseti (Fusarium scirpi).